Consider the following 137-residue polypeptide: Putative pre-16S rRNA nuclease (137 aa).

Belongs to the YqgF nuclease family.

It localises to the cytoplasm. Its function is as follows. Could be a nuclease involved in processing of the 5'-end of pre-16S rRNA. The sequence is that of Putative pre-16S rRNA nuclease from Desulforamulus reducens (strain ATCC BAA-1160 / DSM 100696 / MI-1) (Desulfotomaculum reducens).